A 365-amino-acid chain; its full sequence is Heat-inducible transcription repressor HrcA (365 aa).

This sequence belongs to the HrcA family.

Its function is as follows. Negative regulator of class I heat shock genes (grpE-dnaK-dnaJ and groELS operons). Prevents heat-shock induction of these operons. The chain is Heat-inducible transcription repressor HrcA from Trichormus variabilis (strain ATCC 29413 / PCC 7937) (Anabaena variabilis).